Here is a 149-residue protein sequence, read N- to C-terminus: Oligosaccharyltransferase complex subunit ostc (149 aa).

At 1-32 (METLFSLPFTVLECPNVKLKKPSWLHMPSAMT) the chain is on the cytoplasmic side. A helical membrane pass occupies residues 33–53 (VYAVVIVSYFLITGGIIYDVI). Over 54–83 (VEPPSVGSMTDEHGHQRPVAFLAYRVNGQY) the chain is Extracellular. The helical transmembrane segment at 84 to 104 (IMEGLASSFLFTMGGLGFIIL) threads the bilayer. Over 105–117 (DRSNAPNIPKLNR) the chain is Cytoplasmic. The helical transmembrane segment at 118-138 (FLLLFIGFVSVLLSFFMARVF) threads the bilayer. The Extracellular segment spans residues 139–149 (MRMKLPGYLMG).

The protein belongs to the OSTC family. As to quaternary structure, specific component of the STT3A-containing form of the oligosaccharyltransferase (OST) complex.

The protein localises to the membrane. It functions in the pathway protein modification; protein glycosylation. Functionally, specific component of the STT3A-containing form of the oligosaccharyl transferase (OST) complex that catalyzes the initial transfer of a defined glycan (Glc(3)Man(9)GlcNAc(2) in eukaryotes) from the lipid carrier dolichol-pyrophosphate to an asparagine residue within an Asn-X-Ser/Thr consensus motif in nascent polypeptide chains, the first step in protein N-glycosylation. N-glycosylation occurs cotranslationally and the complex associates with the Sec61 complex at the channel-forming translocon complex that mediates protein translocation across the endoplasmic reticulum (ER). All subunits are required for a maximal enzyme activity. The chain is Oligosaccharyltransferase complex subunit ostc from Danio rerio (Zebrafish).